A 197-amino-acid polypeptide reads, in one-letter code: uncharacterized protein (197 aa).

This is an uncharacterized protein from Methanocaldococcus jannaschii (strain ATCC 43067 / DSM 2661 / JAL-1 / JCM 10045 / NBRC 100440) (Methanococcus jannaschii).